Here is a 603-residue protein sequence, read N- to C-terminus: Glutathione-regulated potassium-efflux system protein KefB (603 aa).

13 helical membrane passes run 5–25, 29–49, 53–73, 87–107, 115–135, 152–172, 180–202, 207–227, 230–250, 268–288, 291–311, 326–346, and 356–376; these read ALLTAGVLFLFVAVVAVPIAA, IGAVLGYLIAGIAIGPWGLGF, VEAILHFSELGVVFLMFIIGL, IFGVGAAQVGLSALILGGALY, SALIGGVGLAMSSTAMALQLM, VLLFQDLAVIPALALIPILAG, WERIGLKVAAFLGMLIGGRYLVR, FIAASGVREVFTAAALLLVLG, LFMEALGLSMALGTFIAGILL, GLLLGLFFISVGMALNLGILY, IVKIMIAVLVLVAVKGAVLYF, FAGVLSQGGEFAFVLFSAAAS, and PLLLVTVTLSMMTTPLLMQVI. Residues 400 to 521 form the RCK N-terminal domain; that stretch reads EPQVIVVGFG…VRHFSRETFS (122 aa).

It belongs to the monovalent cation:proton antiporter 2 (CPA2) transporter (TC 2.A.37) family. KefB subfamily. As to quaternary structure, interacts with the regulatory subunit KefG.

The protein localises to the cell inner membrane. Functionally, pore-forming subunit of a potassium efflux system that confers protection against electrophiles. Catalyzes K(+)/H(+) antiport. The protein is Glutathione-regulated potassium-efflux system protein KefB of Pectobacterium atrosepticum (strain SCRI 1043 / ATCC BAA-672) (Erwinia carotovora subsp. atroseptica).